A 170-amino-acid chain; its full sequence is MALLTALDDTLPEEAQGPGRRMILLSTPSQSDALRACFERNLYPGIATKEELAQGIDIPEPRVQIWFQNERSCQLRQHRRQSRPWPGRRDPQKGRRKRTAITGSQTALLLRAFEKDRFPGIAAREELARETGLPESRIQIWFQNRRARHRGQSGRAPTQASIRCNAAPIG.

DNA-binding regions (homeobox) lie at residues 19–78 (GRRM…LRQH) and 94–153 (GRRK…RGQS). A disordered region spans residues 75-100 (LRQHRRQSRPWPGRRDPQKGRRKRTA).

It belongs to the paired homeobox family. As to expression, expressed in rhabdomyosarcoma TE671 cells as well as in several other normal and cancer cells.

It localises to the nucleus. Functionally, probable transcription activator. Binds the P5 DNA element sequence 5'-GATCTGAGTCTAATTGAGAATTACTGTAC-3'. In Homo sapiens (Human), this protein is Double homeobox protein 1 (DUX1).